Reading from the N-terminus, the 114-residue chain is UPF0145 protein STK_10800 (114 aa).

The protein belongs to the UPF0145 family.

This Sulfurisphaera tokodaii (strain DSM 16993 / JCM 10545 / NBRC 100140 / 7) (Sulfolobus tokodaii) protein is UPF0145 protein STK_10800.